Reading from the N-terminus, the 715-residue chain is D-ribulokinase YDR109C (715 aa).

The tract at residues 1-27 (MKSRKRQNNMQNETREPAVLSSQETSI) is disordered.

The protein belongs to the FGGY kinase family.

It catalyses the reaction D-ribulose + ATP = D-ribulose 5-phosphate + ADP + H(+). It participates in carbohydrate metabolism; pentose and glucuronate interconversion. Its function is as follows. Catalyzes ATP-dependent phosphorylation of D-ribulose at C-5 to form D-ribulose 5-phosphate. Postulated to function in a metabolite repair mechanism by preventing toxic accumulation of free D-ribulose formed by non-specific phosphatase activities. Alternatively, may play a role in regulating D-ribulose 5-phosphate recycling in the pentose phosphate pathway. This chain is D-ribulokinase YDR109C, found in Saccharomyces cerevisiae (strain ATCC 204508 / S288c) (Baker's yeast).